Consider the following 91-residue polypeptide: Acylphosphatase (91 aa).

The region spanning 5-91 is the Acylphosphatase-like domain; that stretch reads RLTAWVRGHV…RGSFTGFEER (87 aa). Active-site residues include R20 and N38.

It belongs to the acylphosphatase family.

It carries out the reaction an acyl phosphate + H2O = a carboxylate + phosphate + H(+). The chain is Acylphosphatase (acyP) from Thermobifida fusca (strain YX).